The primary structure comprises 263 residues: Putative hydro-lyase Pden_0321 (263 aa).

It belongs to the D-glutamate cyclase family.

In Paracoccus denitrificans (strain Pd 1222), this protein is Putative hydro-lyase Pden_0321.